A 149-amino-acid chain; its full sequence is Transcriptional repressor NrdR (149 aa).

A zinc finger spans residues 3–34 (CPFCSHSETQVVETRISEDGDSIRRRRQCASC). Residues 49-139 (PAIVKKDGRR…VYRSFEDIDE (91 aa)) enclose the ATP-cone domain.

The protein belongs to the NrdR family. Requires Zn(2+) as cofactor.

Its function is as follows. Negatively regulates transcription of bacterial ribonucleotide reductase nrd genes and operons by binding to NrdR-boxes. This is Transcriptional repressor NrdR from Albidiferax ferrireducens (strain ATCC BAA-621 / DSM 15236 / T118) (Rhodoferax ferrireducens).